Reading from the N-terminus, the 1088-residue chain is Myocardin-related transcription factor B (1088 aa).

Residue E22 is modified to Phosphoserine. One copy of the RPEL 1 repeat lies at 40-65 (EVLQLRLQQRRTREQLVDQGIMPPLK). Position 66 is a phosphoserine (S66). RPEL repeat units lie at residues 84 to 109 (NFLK…EETF) and 128 to 153 (DDLN…PVDS). Disordered regions lie at residues 165-310 (EDYP…NEPQ), 349-389 (KPLN…PSSL), 472-508 (AELP…STDD), and 528-553 (LSSS…SNLE). Over residues 197 to 213 (SAASPSEPKVSESPSPV) the composition is skewed to low complexity. Polar residues predominate over residues 214 to 226 (TTNTPAQFASVSP). Residues 238–248 (ADQPPPRPAAP) show a composition bias toward pro residues. The span at 272–287 (NPNDKHRSKKCKDPKP) shows a compositional bias: basic and acidic residues. Low complexity predominate over residues 355 to 366 (NSNSGNSALNNA). Phosphothreonine occurs at positions 367 and 370. Polar residues predominate over residues 367-378 (TPNTPRQNTSTP). Residues 389 to 423 (LDDLKVSELKTELKLRGLPVSGTKPDLIERLKPYQ) enclose the SAP domain. The span at 528–540 (LSSSPLRMTNNED) shows a compositional bias: polar residues. S541 and S543 each carry phosphoserine. Low complexity predominate over residues 541–550 (SLSPTSSTLS). Residues 545–601 (TSSTLSNLELDAAEKDRKLQEKEKQIEELKRKLEQEQKLVEVLKMQLEVEKRGQQQR) are a coiled coil. A required for interaction with itself and with MRTFA region spans residues 563-591 (LQEKEKQIEELKRKLEQEQKLVEVLKMQL). Disordered stretches follow at residues 595 to 655 (KRGQ…QPVS) and 829 to 886 (NAPL…STQA). K628 participates in a covalent cross-link: Glycyl lysine isopeptide (Lys-Gly) (interchain with G-Cter in SUMO1). Residues 829 to 838 (NAPLPSLQNG) are compositionally biased toward polar residues. Residues 867–879 (KTKDPPRYEEAIK) show a composition bias toward basic and acidic residues. At S921 the chain carries Phosphoserine.

In terms of assembly, interacts with MRTFA and SRF. O-glycosylated.

It localises to the nucleus. Acts as a transcriptional coactivator of serum response factor (SRF). Required for skeletal myogenic differentiation. This chain is Myocardin-related transcription factor B, found in Homo sapiens (Human).